Consider the following 492-residue polypeptide: Ketol-acid reductoisomerase (NADP(+)) (492 aa).

Positions 15–208 (AQLGKCRFMA…GGHRAGVLES (194 aa)) constitute a KARI N-terminal Rossmann domain. Residues 45 to 48 (CGAQ), Arg68, Arg76, Ser78, and 108 to 110 (DKQ) each bind NADP(+). His132 is a catalytic residue. Gly158 serves as a coordination point for NADP(+). KARI C-terminal knotted domains are found at residues 209–344 (SFVA…TAAQ) and 345–485 (FEGK…MTDM). Mg(2+) is bound by residues Asp217, Glu221, Glu389, and Glu393. Residue Ser414 coordinates substrate.

This sequence belongs to the ketol-acid reductoisomerase family. It depends on Mg(2+) as a cofactor.

It catalyses the reaction (2R)-2,3-dihydroxy-3-methylbutanoate + NADP(+) = (2S)-2-acetolactate + NADPH + H(+). It carries out the reaction (2R,3R)-2,3-dihydroxy-3-methylpentanoate + NADP(+) = (S)-2-ethyl-2-hydroxy-3-oxobutanoate + NADPH + H(+). The protein operates within amino-acid biosynthesis; L-isoleucine biosynthesis; L-isoleucine from 2-oxobutanoate: step 2/4. It participates in amino-acid biosynthesis; L-valine biosynthesis; L-valine from pyruvate: step 2/4. Involved in the biosynthesis of branched-chain amino acids (BCAA). Catalyzes an alkyl-migration followed by a ketol-acid reduction of (S)-2-acetolactate (S2AL) to yield (R)-2,3-dihydroxy-isovalerate. In the isomerase reaction, S2AL is rearranged via a Mg-dependent methyl migration to produce 3-hydroxy-3-methyl-2-ketobutyrate (HMKB). In the reductase reaction, this 2-ketoacid undergoes a metal-dependent reduction by NADPH to yield (R)-2,3-dihydroxy-isovalerate. The sequence is that of Ketol-acid reductoisomerase (NADP(+)) from Erwinia tasmaniensis (strain DSM 17950 / CFBP 7177 / CIP 109463 / NCPPB 4357 / Et1/99).